The chain runs to 102 residues: Large ribosomal subunit protein bL21 (102 aa).

It belongs to the bacterial ribosomal protein bL21 family. In terms of assembly, part of the 50S ribosomal subunit. Contacts protein L20.

Its function is as follows. This protein binds to 23S rRNA in the presence of protein L20. The sequence is that of Large ribosomal subunit protein bL21 from Pediococcus pentosaceus (strain ATCC 25745 / CCUG 21536 / LMG 10740 / 183-1w).